The chain runs to 705 residues: Probable E3 ubiquitin-protein ligase MID2 (705 aa).

An RING-type zinc finger spans residues Cys-30–Arg-80. The segment at Ile-137–Pro-184 adopts a B box-type 1; degenerate zinc-finger fold. Residues Leu-190–Leu-232 form a B box-type 2 zinc finger. 4 residues coordinate Zn(2+): Cys-195, His-198, Cys-218, and His-224. Residues Asn-233–Ala-301 are a coiled coil. The region spanning Leu-340–Leu-399 is the COS domain. Positions Pro-404–Gln-504 constitute a Fibronectin type-III domain. Residues Ile-486 to Phe-679 form the B30.2/SPRY domain.

Belongs to the TRIM/RBCC family. As to quaternary structure, homodimer or heterodimer with MID1. Interacts with IGBP1. Post-translationally, phosphorylated on serine and threonine residues. In terms of tissue distribution, low abundance in brain and lung, with even lower levels in heart, liver, and kidney.

Its subcellular location is the cytoplasm. The protein localises to the cytoskeleton. The enzyme catalyses S-ubiquitinyl-[E2 ubiquitin-conjugating enzyme]-L-cysteine + [acceptor protein]-L-lysine = [E2 ubiquitin-conjugating enzyme]-L-cysteine + N(6)-ubiquitinyl-[acceptor protein]-L-lysine.. Its pathway is protein modification; protein ubiquitination. Its function is as follows. E3 ubiquitin ligase that plays a role in microtubule stabilization. Mediates the 'Lys-48'-linked polyubiquitination of LRRK2 to drive its localization to microtubules and its proteasomal degradation in neurons. This ubiquitination inhibits LRRK2 kinase activation by RAB29. The protein is Probable E3 ubiquitin-protein ligase MID2 (Mid2) of Mus musculus (Mouse).